The chain runs to 382 residues: MSWQQRIEQALAERRLNAAYRRRQTTEGGNGRQIRLGDRLYLNFSGNDYLGLSQDARVIAAWQQGARYGVGNGGSGHVTGFSAAHQALEEQLAAWLGYPRALLFISYAANQAVLAALMQKGDRILADRLSHASLLEAAGAVAGRRAPVPAQSTAGLARICLAKPCDGQRLAVTEGLFSMDGDGAPLAELHRLTRAAGAWLMVDDAHGIGVRGEQGRGSCWQQGVRPELLVATFGKAFGVSGAAVLCDEATAEYLLQFARHLIYSTAMPPAQACALQAALARIREGDDLRARLQDNIRRFRQGAAPLALTLTDSDTAIQPLLVGDNQRALDLATRLRECGLWVSAIRPPTVPPGGARLRLLLTAAHQSQDIDRLLEVLNDVSQ.

2 residues coordinate substrate: Arg-21 and His-131. Residues Ser-178, His-206, and Thr-232 each coordinate pyridoxal 5'-phosphate. Position 235 is an N6-(pyridoxal phosphate)lysine (Lys-235). Thr-349 serves as a coordination point for substrate.

This sequence belongs to the class-II pyridoxal-phosphate-dependent aminotransferase family. BioF subfamily. Homodimer. Pyridoxal 5'-phosphate serves as cofactor.

It carries out the reaction 6-carboxyhexanoyl-[ACP] + L-alanine + H(+) = (8S)-8-amino-7-oxononanoate + holo-[ACP] + CO2. Its pathway is cofactor biosynthesis; biotin biosynthesis. Functionally, catalyzes the decarboxylative condensation of pimeloyl-[acyl-carrier protein] and L-alanine to produce 8-amino-7-oxononanoate (AON), [acyl-carrier protein], and carbon dioxide. This chain is 8-amino-7-oxononanoate synthase, found in Serratia marcescens.